A 279-amino-acid polypeptide reads, in one-letter code: Presqualene diphosphate synthase (279 aa).

It belongs to the phytoene/squalene synthase family. HpnD subfamily.

It catalyses the reaction 2 (2E,6E)-farnesyl diphosphate = presqualene diphosphate + diphosphate. It participates in secondary metabolite biosynthesis; hopanoid biosynthesis. Functionally, involved in the biosynthesis of the hopanoid precursor squalene (SQ) from farnesyl diphosphate (FPP). Catalyzes the first step, the formation of presqualene diphosphate (PSPP) from two molecules of FPP. The protein is Presqualene diphosphate synthase of Sinorhizobium fredii (strain NBRC 101917 / NGR234).